The following is a 535-amino-acid chain: MGFALVLIFLFGFYLFLMKSSSIFPQRPFTFLYDLWVLLLVLRFLFSLIQILILCLFNFRFVEMTSNNKKKKTELCDLPKCLAPHILSWLPTKTAVTVSLLFMKGWWRSEMKNLSSLKFSFSDDQEEEHFVRFVDQVLRQRGNRKLDSFSLTLNDEIDGGFVTHLVDYPLDNGVEKLKLSIYDIKGNFQLSSRVFSQATLVTLKLATNRSLIWINGDDVAAAHLPCLKTLWLDDVLVADVKVFVRLLSRCPILEELVMIDMKWHNWEACFVVSASLRRLKIVWTDYVEMDEYDRCPQSVLFDTPNVLYLEYTDHIAGQYPLLKFSSLIEAKIRLEMIDEKEEEDEGQEVIVGDNATAFITGITSVRKLYLYANTIQVLHHYFDPPIPEFVYLTHLTIQSDKELGWDAIPELLSKCPHLETLVLEGLFHLATDVCGDVCPCRRNMEQAISYLVKSPVTHLEIYEGVVGKKRGEVTEDAARFGEQVRWFLMRMLHLQQVKIYGQTEDSVTALYDIATELRRLEGKASPNVQISVLQA.

3 helical membrane-spanning segments follow: residues 3 to 23 (FALV…SSSI), 37 to 57 (VLLL…LCLF), and 82 to 102 (LAPH…SLLF). The region spanning 73–119 (TELCDLPKCLAPHILSWLPTKTAVTVSLLFMKGWWRSEMKNLSSLKF) is the F-box; degenerate domain.

As to quaternary structure, part of a SCF (ASK-cullin-F-box) protein ligase complex. Interacts with ASK4.

It localises to the membrane. Its pathway is protein modification; protein ubiquitination. Component of SCF(ASK-cullin-F-box) E3 ubiquitin ligase complexes, which may mediate the ubiquitination and subsequent proteasomal degradation of target proteins. This Arabidopsis thaliana (Mouse-ear cress) protein is F-box protein At1g56610.